Here is a 320-residue protein sequence, read N- to C-terminus: tRNA dimethylallyltransferase (320 aa).

17–24 provides a ligand contact to ATP; sequence GPTAVGKT. 19–24 is a binding site for substrate; it reads TAVGKT. The tract at residues 42-45 is interaction with substrate tRNA; it reads DSMQ.

Belongs to the IPP transferase family. As to quaternary structure, monomer. Mg(2+) is required as a cofactor.

The enzyme catalyses adenosine(37) in tRNA + dimethylallyl diphosphate = N(6)-dimethylallyladenosine(37) in tRNA + diphosphate. In terms of biological role, catalyzes the transfer of a dimethylallyl group onto the adenine at position 37 in tRNAs that read codons beginning with uridine, leading to the formation of N6-(dimethylallyl)adenosine (i(6)A). The polypeptide is tRNA dimethylallyltransferase (Bacillus thuringiensis (strain Al Hakam)).